The primary structure comprises 252 residues: Agamous-like MADS-box protein AGL6 (252 aa).

In terms of domain architecture, MADS-box spans 3 to 57 (RGRVEMKRIENKINRQVTFSKRRNGLLKKAYELSVLCDAEVALIIFSSRGKLYEF). The 91-residue stretch at 86-176 (TQSWCQEVTK…KIKFETEGHA (91 aa)) folds into the K-box domain. Residues 91–173 (QEVTKLKSKY…KQLKIKFETE (83 aa)) adopt a coiled-coil conformation.

As to quaternary structure, forms a heterodimer with AGAMOUS. Interacts with AGL15 and AGL16. In terms of tissue distribution, preferentially expressed in flowers.

The protein localises to the nucleus. In terms of biological role, probable transcription factor. Forms a heterodimer via the K-box domain with AG, that could be involved in genes regulation during floral meristem development. This chain is Agamous-like MADS-box protein AGL6 (AGL6), found in Arabidopsis thaliana (Mouse-ear cress).